The following is a 475-amino-acid chain: GlcNAc-binding protein A (475 aa).

An N-terminal signal peptide occupies residues 1–27 (MPKLTQLSLVTLALTAGSTLVSQTASA). Residues 28-195 (HGYVVSPESR…SFYNAIDVNF (168 aa)) form the Chitin-binding type-4 domain. The Chitin-binding type-3 domain occupies 426-468 (AGTKVLQPKTGKVYQCKPWPYNGYCVQWSPTATGFEPGIGNSW).

This sequence belongs to the GbpA family.

Its subcellular location is the secreted. Probably interacts with GlcNAc residues. May promote attachment to both epithelial cell surfaces and chitin. In Shewanella oneidensis (strain ATCC 700550 / JCM 31522 / CIP 106686 / LMG 19005 / NCIMB 14063 / MR-1), this protein is GlcNAc-binding protein A.